The following is a 125-amino-acid chain: Prefoldin subunit beta (125 aa).

Belongs to the prefoldin subunit beta family. As to quaternary structure, heterohexamer of two alpha and four beta subunits.

The protein localises to the cytoplasm. Its function is as follows. Molecular chaperone capable of stabilizing a range of proteins. Seems to fulfill an ATP-independent, HSP70-like function in archaeal de novo protein folding. The protein is Prefoldin subunit beta (pfdB) of Sulfurisphaera tokodaii (strain DSM 16993 / JCM 10545 / NBRC 100140 / 7) (Sulfolobus tokodaii).